The following is a 538-amino-acid chain: Ubiquitin domain-containing protein DSK2a (538 aa).

In terms of domain architecture, Ubiquitin-like spans 18–93 (VAVNVRCSNG…VHMVRGFVPS (76 aa)). A disordered region spans residues 95 to 120 (PSAPAANAGNQTTAPQAVGSNDSSNL). Positions 102–119 (AGNQTTAPQAVGSNDSSN) are enriched in polar residues. STI1 domains follow at residues 138–179 (GNAM…QNLM) and 192–231 (NPQM…MREM). Positions 289–316 (QGVTTQGSDTSNNISAPNAETGTPNANP) are disordered. 2 STI1 domains span residues 357–394 (SPLG…MNQL) and 398–433 (NPQL…MQQM). Positions 491 to 535 (PPEERFATQLQQLQEMGFYDRAENIRALLATNGNVNAAVERLLGS) constitute a UBA domain.

In terms of assembly, interacts with 'Lys-48'-linked polyubiquitin chains via its UBA domain. Interacts with RPN10 and RPN13. Interacts with PEX2 and PEX12. In terms of tissue distribution, ubiquitous with a strong expression level in inflorescence.

It is found in the nucleus. Its subcellular location is the cytoplasm. Functionally, binds and presumably selects ubiquitin-conjugates for destruction. Prefers multiubiquitin chains rather than single ubiquitins, with a binding affinity for 'Lys-48'-linked ubiquitin chains. Acts as a ubiquitin receptor that associates with the 26S proteasomal docking subunit RPN10 for the indirect recognition of ubiquitinated substrates of ubiquitin/26S proteasome-mediated proteolysis (UPP). The polypeptide is Ubiquitin domain-containing protein DSK2a (DSK2A) (Arabidopsis thaliana (Mouse-ear cress)).